A 165-amino-acid polypeptide reads, in one-letter code: Nucleotide-binding protein LBF_1338 (165 aa).

This sequence belongs to the YajQ family.

Its function is as follows. Nucleotide-binding protein. The polypeptide is Nucleotide-binding protein LBF_1338 (Leptospira biflexa serovar Patoc (strain Patoc 1 / Ames)).